The primary structure comprises 132 residues: MVMTDPIADFLTRIRNANQAKHEVLEVPASNIKKGIATILKNEGFVKNVEFIEDDKQGIIRVFLKYGPNGEKVITNLKRVSKPGLRVYSKREDIPKVLNGLGIAIISTSEGLLTDKQARQKNVGGEVIAYVW.

Belongs to the universal ribosomal protein uS8 family. Part of the 30S ribosomal subunit. Contacts proteins S5 and S12.

In terms of biological role, one of the primary rRNA binding proteins, it binds directly to 16S rRNA central domain where it helps coordinate assembly of the platform of the 30S subunit. This is Small ribosomal subunit protein uS8 from Streptococcus suis (strain 98HAH33).